The primary structure comprises 175 residues: NADH-ubiquinone oxidoreductase chain 6 (175 aa).

The next 5 helical transmembrane spans lie at M1–S21, V27–F47, G49–G69, V88–L108, and Y149–M169.

The protein belongs to the complex I subunit 6 family. Core subunit of respiratory chain NADH dehydrogenase (Complex I) which is composed of 45 different subunits.

The protein localises to the mitochondrion inner membrane. It catalyses the reaction a ubiquinone + NADH + 5 H(+)(in) = a ubiquinol + NAD(+) + 4 H(+)(out). Functionally, core subunit of the mitochondrial membrane respiratory chain NADH dehydrogenase (Complex I) which catalyzes electron transfer from NADH through the respiratory chain, using ubiquinone as an electron acceptor. Essential for the catalytic activity and assembly of complex I. In Pteropus dasymallus (Ryukyu flying fox), this protein is NADH-ubiquinone oxidoreductase chain 6 (MT-ND6).